A 1100-amino-acid chain; its full sequence is cGMP-inhibited 3',5'-cyclic phosphodiesterase 3B (1100 aa).

Residues 1–11 (MRKDERERDAP) show a composition bias toward basic and acidic residues. The segment at 1–28 (MRKDERERDAPAMRSPPPPPASAASPPE) is interaction with RAPGEF3. Residues 1-29 (MRKDERERDAPAMRSPPPPPASAASPPES) are disordered. Ser-15 carries the phosphoserine modification. 6 consecutive transmembrane segments (helical) span residues 69-89 (AGAR…LLGA), 110-130 (LSLS…CFLT), 140-160 (AGSW…FAAW), 170-190 (PAAA…TLAP), 198-218 (VLVL…LGAL), and 225-245 (LLSC…DHFF). The residue at position 273 (Ser-273) is a Phosphoserine; by PKB/AKT1 or PKB/AKT2. Ser-274 and Ser-421 each carry phosphoserine. Disordered regions lie at residues 400-423 (RKLH…SSGA) and 570-590 (EPDG…SVFS). Positions 408-423 (GRTSFPTPQLRRSSGA) are enriched in polar residues. Positions 415 to 439 (PQLRRSSGASSLLTNEHCSRWDRSS) are interaction with PIK3R6. The segment covering 573–583 (GTDHPSEKSGE) has biased composition (basic and acidic residues). A PDEase domain is found at 627-1061 (PNIDQEVSLD…KIWKEIIEEE (435 aa)). His-713 acts as the Proton donor in catalysis. Residue His-713 coordinates AMP. 4 residues coordinate Mg(2+): His-717, His-797, Asp-798, and Asp-913. Residues Asp-798, Asp-913, and Gln-964 each coordinate AMP. Residues 993 to 1024 (EEGDDTESDDDDDDDDGDGGEELDSDDEETED) are compositionally biased toward acidic residues. A disordered region spans residues 993–1033 (EEGDDTESDDDDDDDDGDGGEELDSDDEETEDNLNPKPQRR). Residues 1044–1079 (MHHLTENHKIWKEIIEEEEEKCKAEGNKLQVDNASL) adopt a coiled-coil conformation.

Belongs to the cyclic nucleotide phosphodiesterase family. PDE3 subfamily. In terms of assembly, homodimer. Interacts with PIK3CG; regulates PDE3B activity and thereby cAMP levels in cells. Interacts with RAPGEF3 and PIK3R6; form a signaling complex that regulates phosphatidylinositol 3-kinase gamma in angiogenesis. Interacts with ABHD15; this interaction regulates PDE3B's stability and expression and, thereby, impacts the antilipolytic action of insulin. Requires Mg(2+) as cofactor. It depends on Mn(2+) as a cofactor. Post-translationally, phosphorylation at Ser-273 mediates insulin-induced activation of PDE3B. In terms of tissue distribution, abundant in adipose tissues.

It is found in the membrane. The enzyme catalyses a nucleoside 3',5'-cyclic phosphate + H2O = a nucleoside 5'-phosphate + H(+). It catalyses the reaction 3',5'-cyclic AMP + H2O = AMP + H(+). It carries out the reaction 3',5'-cyclic GMP + H2O = GMP + H(+). Inhibited by cGMP. Functionally, cyclic nucleotide phosphodiesterase with a dual-specificity for the second messengers cAMP and cGMP, which are key regulators of many important physiological processes. Regulates angiogenesis by inhibiting the cAMP-dependent guanine nucleotide exchange factor RAPGEF3 and downstream phosphatidylinositol 3-kinase gamma-mediated signaling. Controls cardiac contractility by reducing cAMP concentration in cardiocytes. The polypeptide is cGMP-inhibited 3',5'-cyclic phosphodiesterase 3B (Mus musculus (Mouse)).